The sequence spans 151 residues: Transcriptional regulator MraZ (151 aa).

2 SpoVT-AbrB domains span residues 5 to 52 (ANAI…PLSE) and 81 to 124 (AVDL…DEDA).

The protein belongs to the MraZ family. Forms oligomers.

The protein resides in the cytoplasm. It is found in the nucleoid. The chain is Transcriptional regulator MraZ from Pseudomonas syringae pv. tomato (strain ATCC BAA-871 / DC3000).